The chain runs to 216 residues: GTP:AMP phosphotransferase, mitochondrial (216 aa).

15–20 (GSGKGT) is a GTP binding site. Residues 35 to 64 (STGDILRQNIIKNTELGKKAKQYIAEGKLV) form an NMPbind region. Residues threonine 36, arginine 41, 62 to 64 (KLV), 89 to 92 (GFPR), and glutamine 96 contribute to the AMP site. The LID stretch occupies residues 125–162 (NRWIHAPSGRVYNIGFKNPKVPGKDDVTGEPLMQREDD). GTP is bound by residues arginine 126 and 135–136 (VY). 2 residues coordinate AMP: arginine 159 and arginine 170. Threonine 199 serves as a coordination point for GTP.

The protein belongs to the adenylate kinase family. AK3 subfamily. As to quaternary structure, monomer. As to expression, ubiquitously expressed with highest levels expressed in the abdomen, suggesting a function in muscle tissues.

The protein resides in the mitochondrion matrix. The enzyme catalyses a ribonucleoside 5'-triphosphate + AMP = a ribonucleoside 5'-diphosphate + ADP. Functionally, involved in maintaining the homeostasis of cellular nucleotides by catalyzing the interconversion of nucleoside phosphates. Has GTP:AMP phosphotransferase and ITP:AMP phosphotransferase activities. The chain is GTP:AMP phosphotransferase, mitochondrial from Drosophila melanogaster (Fruit fly).